The chain runs to 170 residues: Putative apoptosis inhibitor ORF87 (170 aa).

BIR repeat units lie at residues R22 to K92 and R104 to S169.

Its function is as follows. May act as an apoptosis inhibitor. In Ostreid herpesvirus 1 (isolate France) (OsHV-1), this protein is Putative apoptosis inhibitor ORF87.